The primary structure comprises 710 residues: Cyclin-dependent kinase G-2 (710 aa).

The interval 1-350 is disordered; it reads MAAGRHGGYR…ETPEPVKPPH (350 aa). Basic and acidic residues predominate over residues 8 to 30; the sequence is GYRDYEARERELDAEASRRSKEQ. The segment covering 31 to 40 has biased composition (basic residues); that stretch reads QHHHHPSGRH. Residues 41 to 64 show a composition bias toward basic and acidic residues; the sequence is QRGDSDPRCEADRRRDGGRSRGGR. Low complexity predominate over residues 124-133; sequence SVVAASASSP. Residues 144–163 show a composition bias toward basic and acidic residues; the sequence is WDRDSPKPMHSDVAKGKKAV. Over residues 170–182 the composition is skewed to pro residues; sequence LPLPPPPPLPPQD. 2 stretches are compositionally biased toward basic and acidic residues: residues 183 to 195 and 209 to 218; these read HIPE…KSPM and LQEHAESRVM. Over residues 299 to 308 the composition is skewed to acidic residues; sequence DENEDLEVDK. Basic and acidic residues predominate over residues 335–344; that stretch reads YEVRRSETPE. Residues 365–656 enclose the Protein kinase domain; the sequence is FERLNKINEG…ADAALQHEWF (292 aa). ATP is bound by residues 371-379 and lysine 394; that span reads INEGTYGVV. At threonine 375 the chain carries Phosphothreonine. The residue at position 376 (tyrosine 376) is a Phosphotyrosine. Aspartate 489 (proton acceptor) is an active-site residue. At serine 516 the chain carries Phosphoserine. Threonine 522 is subject to Phosphothreonine.

The protein belongs to the protein kinase superfamily. CMGC Ser/Thr protein kinase family. CDC2/CDKX subfamily.

The enzyme catalyses L-seryl-[protein] + ATP = O-phospho-L-seryl-[protein] + ADP + H(+). It catalyses the reaction L-threonyl-[protein] + ATP = O-phospho-L-threonyl-[protein] + ADP + H(+). The catalysed reaction is [DNA-directed RNA polymerase] + ATP = phospho-[DNA-directed RNA polymerase] + ADP + H(+). The polypeptide is Cyclin-dependent kinase G-2 (CDKG-2) (Oryza sativa subsp. indica (Rice)).